The following is a 274-amino-acid chain: uncharacterized protein (274 aa).

An N-terminal signal peptide occupies residues 1–17 (MKKLLAGFLTLSLALAA). The N-palmitoyl cysteine moiety is linked to residue Cys18. Residue Cys18 is the site of S-diacylglycerol cysteine attachment. Residues 18-169 (CSNGSDDDSS…DANNGASSAN (152 aa)) form a disordered region. Basic and acidic residues predominate over residues 25 to 76 (DSSKKDDSSKDNQSSDDKSKDSKNDDKKNNDSDKDKDNNSDSDKNSDSKSDD). A compositionally biased stretch (low complexity) spans 91 to 169 (SDNASGSDSS…DANNGASSAN (79 aa)).

The protein resides in the cell membrane. This is an uncharacterized protein from Staphylococcus saprophyticus subsp. saprophyticus (strain ATCC 15305 / DSM 20229 / NCIMB 8711 / NCTC 7292 / S-41).